The sequence spans 949 residues: Serine/threonine-protein kinase KIPK2 (949 aa).

Disordered regions lie at residues 79 to 116 (LETS…VGPS), 323 to 344 (TALS…TEKS), 407 to 426 (STST…DKNV), and 495 to 525 (SSEK…SNLS). Residues 81-94 (TSASAGTSRSTSPS) are compositionally biased toward low complexity. Composition is skewed to polar residues over residues 407–420 (STST…NTSH) and 495–512 (SSEK…LGDY). The span at 513 to 525 (SSSTSMSEESNLS) shows a compositional bias: low complexity. One can recognise a Protein kinase domain in the interval 559–898 (FNLLKKLGCG…AAEIKRHPFF (340 aa)). Residues 565–573 (LGCGDIGTV) and K588 each bind ATP. Catalysis depends on D684, which acts as the Proton acceptor.

Belongs to the protein kinase superfamily. Ser/Thr protein kinase family. As to quaternary structure, interacts with KCBP, PERK8, PERK9, PERK10 and PERK13.

The enzyme catalyses L-seryl-[protein] + ATP = O-phospho-L-seryl-[protein] + ADP + H(+). It carries out the reaction L-threonyl-[protein] + ATP = O-phospho-L-threonyl-[protein] + ADP + H(+). In terms of biological role, serine/threonine-protein kinase that could be involved in the negative regulation of root growth. The polypeptide is Serine/threonine-protein kinase KIPK2 (Arabidopsis thaliana (Mouse-ear cress)).